Here is a 308-residue protein sequence, read N- to C-terminus: Oxygen-dependent coproporphyrinogen-III oxidase (308 aa).

S100 contributes to the substrate binding site. Residues H104 and H114 each contribute to the a divalent metal cation site. Catalysis depends on H114, which acts as the Proton donor. Position 116-118 (116-118) interacts with substrate; sequence NFR. 2 residues coordinate a divalent metal cation: H153 and H183. Residues 248–283 form an important for dimerization region; the sequence is YVEFNLVFDRGTIFGLQSGGRTESILSSMPPMATWK. Residue 266–268 participates in substrate binding; the sequence is GGR.

Belongs to the aerobic coproporphyrinogen-III oxidase family. In terms of assembly, homodimer. It depends on a divalent metal cation as a cofactor.

It is found in the cytoplasm. It carries out the reaction coproporphyrinogen III + O2 + 2 H(+) = protoporphyrinogen IX + 2 CO2 + 2 H2O. It participates in porphyrin-containing compound metabolism; protoporphyrin-IX biosynthesis; protoporphyrinogen-IX from coproporphyrinogen-III (O2 route): step 1/1. Involved in the heme biosynthesis. Catalyzes the aerobic oxidative decarboxylation of propionate groups of rings A and B of coproporphyrinogen-III to yield the vinyl groups in protoporphyrinogen-IX. The sequence is that of Oxygen-dependent coproporphyrinogen-III oxidase from Francisella tularensis subsp. mediasiatica (strain FSC147).